Reading from the N-terminus, the 317-residue chain is MANSSSFSPSTTVTDLISTVHDDIIESHILTRLDGATLASVSCASSHLHHLASNEILWSKICRSTWPSCSGGSRSFFSDAYSMVETAGTVSDLDRPFPELISAVDLHYRGKLIFSRVVKTETTTAWFKSSPLRIDLVDTKDTVATPIKRRQRTEDTCRDLEKDLTLSWIVIDPIGKRAANISSHRPVSVQRNWISGEVEAQFATVVGAVECVITVVTCGEEEMHVREVSLKVEKMEGTHLNGRDSLVILRSVMEGKRVNGSRREVESKKRHEEFMEKKREMKEKKMRVESVFDILTVAFGILGFVLLVVFCLWRTSI.

Positions 25-74 (IESHILTRLDGATLASVSCASSHLHHLASNEILWSKICRSTWPSCSGGSR) constitute an F-box domain.

The sequence is that of Probable F-box protein At2g36090 from Arabidopsis thaliana (Mouse-ear cress).